The primary structure comprises 400 residues: Ribosomal RNA large subunit methyltransferase I (400 aa).

Positions 6–84 (FPRLVLAKGR…NEAIDSAFFE (79 aa)) constitute a PUA domain.

This sequence belongs to the methyltransferase superfamily. RlmI family.

The protein resides in the cytoplasm. The enzyme catalyses cytidine(1962) in 23S rRNA + S-adenosyl-L-methionine = 5-methylcytidine(1962) in 23S rRNA + S-adenosyl-L-homocysteine + H(+). In terms of biological role, specifically methylates the cytosine at position 1962 (m5C1962) of 23S rRNA. This is Ribosomal RNA large subunit methyltransferase I from Klebsiella pneumoniae (strain 342).